The primary structure comprises 178 residues: Protamine-like protein (178 aa).

Disordered regions lie at residues 1–27 and 77–178; these read PSTTSSKSPKRRAKSPRRKRTGPTVSD and SVVK…RAKK. Composition is skewed to basic residues over residues 8–21 and 94–178; these read SPKRRAKSPRRKRT and PRRR…RAKK. The H15 domain maps to 21 to 89; sequence TGPTVSDLIL…KAKGFYKLNK (69 aa).

In terms of tissue distribution, male germ cells.

The protein localises to the nucleus. The protein resides in the chromosome. Its function is as follows. Replaces histones in the chromatin of sperm during the haploid phase of spermatogenesis. Compacts sperm DNA into a highly condensed, stable and inactive complex. This Mullus surmuletus (Striped red mullet) protein is Protamine-like protein.